Here is a 377-residue protein sequence, read N- to C-terminus: Ribosomal RNA large subunit methyltransferase G (377 aa).

It belongs to the methyltransferase superfamily. RlmG family.

It is found in the cytoplasm. The catalysed reaction is guanosine(1835) in 23S rRNA + S-adenosyl-L-methionine = N(2)-methylguanosine(1835) in 23S rRNA + S-adenosyl-L-homocysteine + H(+). In terms of biological role, specifically methylates the guanine in position 1835 (m2G1835) of 23S rRNA. This Aeromonas salmonicida (strain A449) protein is Ribosomal RNA large subunit methyltransferase G.